The following is a 444-amino-acid chain: MISKTLYQKIYDSHIVYQDKNGGAILYIDLHLLHEVTSPQAFDALRSKKREVRQSKKTFATMDHNVSTTIQNISASGSMARKQMEQLIKNCQEFNIPLYDINNPNQGIVHVIAPEKGMTLPGMTIVCGDSHTSTHGAFGALAFGIGTSEVEHVLATQTLKQKRFKNMKIEIIGKIPKFVTAKDIILFVIGQLGSSSGTGYVIEFCGNIIKNMSMEERMTVCNMAIEMXAKSGLIAPXXITYKYLKDKIYSPSGLFWEKSLDYWKCLKSDKNAYFDKCITVDISNLAPQITWGTNPDQVISIDEKIPDYNNINSEVKKDSAKSACKYMGLKSNTYLTNISIDKVFIGSXTNARIEDLRSAAKILQNRKIAKHVKAIVVPGSGLVKKKAEQEGLDKIFIDSGFEWRLPGCSMXLGMNKDRLNFGERXXSHSNRNFEGRQGRGGRTH.

Residues X348, C408, and X411 each contribute to the [4Fe-4S] cluster site. Positions 423 to 444 (ERXXSHSNRNFEGRQGRGGRTH) are disordered.

The protein belongs to the aconitase/IPM isomerase family. LeuC type 1 subfamily. In terms of assembly, heterodimer of LeuC and LeuD. [4Fe-4S] cluster serves as cofactor.

The enzyme catalyses (2R,3S)-3-isopropylmalate = (2S)-2-isopropylmalate. It functions in the pathway amino-acid biosynthesis; L-leucine biosynthesis; L-leucine from 3-methyl-2-oxobutanoate: step 2/4. Its function is as follows. Catalyzes the isomerization between 2-isopropylmalate and 3-isopropylmalate, via the formation of 2-isopropylmaleate. The protein is 3-isopropylmalate dehydratase large subunit of Buchnera aphidicola subsp. Uroleucon rudbeckiae.